Reading from the N-terminus, the 351-residue chain is Nicotinate-nucleotide--dimethylbenzimidazole phosphoribosyltransferase (351 aa).

Glu317 serves as the catalytic Proton acceptor.

This sequence belongs to the CobT family.

It catalyses the reaction 5,6-dimethylbenzimidazole + nicotinate beta-D-ribonucleotide = alpha-ribazole 5'-phosphate + nicotinate + H(+). Its pathway is nucleoside biosynthesis; alpha-ribazole biosynthesis; alpha-ribazole from 5,6-dimethylbenzimidazole: step 1/2. Functionally, catalyzes the synthesis of alpha-ribazole-5'-phosphate from nicotinate mononucleotide (NAMN) and 5,6-dimethylbenzimidazole (DMB). The polypeptide is Nicotinate-nucleotide--dimethylbenzimidazole phosphoribosyltransferase (Ectopseudomonas mendocina (strain ymp) (Pseudomonas mendocina)).